Here is a 162-residue protein sequence, read N- to C-terminus: Phosphopantetheine adenylyltransferase (162 aa).

Ser-9 lines the substrate pocket. Residues 9-10 (SF) and His-17 contribute to the ATP site. Substrate-binding residues include Lys-41, Leu-73, and Lys-87. ATP-binding positions include 88–90 (GLR), Glu-98, and 122–128 (YSFLSSS).

This sequence belongs to the bacterial CoaD family. Homohexamer. It depends on Mg(2+) as a cofactor.

The protein localises to the cytoplasm. The enzyme catalyses (R)-4'-phosphopantetheine + ATP + H(+) = 3'-dephospho-CoA + diphosphate. Its pathway is cofactor biosynthesis; coenzyme A biosynthesis; CoA from (R)-pantothenate: step 4/5. In terms of biological role, reversibly transfers an adenylyl group from ATP to 4'-phosphopantetheine, yielding dephospho-CoA (dPCoA) and pyrophosphate. This Salinispora tropica (strain ATCC BAA-916 / DSM 44818 / JCM 13857 / NBRC 105044 / CNB-440) protein is Phosphopantetheine adenylyltransferase.